We begin with the raw amino-acid sequence, 626 residues long: MTNTVPSVPAVPNLPTQSDPFFNERSLEQLTQTVLQDLQQAGVSEAESAPTPLSVPTPALPTTSALAVPQSPTAIANVPAPPSSIDERSLAQLAQAVLQDPQLASAIASIFPSVTLPTSASVPRSVPVPPSFLPSLVPTAPPIHDEVGVIPHHQLPVPSQPTPAGLQQTASSKSGSGFYFIDEQVETAIAALHSNLTVFPQLTTSSIPTLTGAHSAGAVGFDIHQVRRDFPILQERVNGRPLVWFDNAATTQKPQVVIDRLSHYYQHENSNIHRAAHELAARSTDAYEAAREQVRHFLNAASTEEVVFVRGTTEAINLVAKSWGSQNLKEGDEIVITWLEHHANIVPWQQLSAETGARLRVVPVDDYGQVRLDEYQKLLSDRTKIVSFTQVSNALGTITPAKEIIELAHRYGAKVLLDGAQSVSHLAVDVQALDCDWFVFSGHKVFGPTGIGVLYGKQELLDATLPWQSGGNMIADVTFEKTVYQPAPARFEAGTGNIADAVGLGAALEYVQKIGLEAIAAYEHELLVHGTALLSQIPGLRLIGTAPHKAAVLSFVLEGFSPEAIGQALNREGIAVRAGHHCAQPILRRFGLETTVRPSLAFYNTFEELETLAAAIRRIQTGSLAL.

Disordered regions lie at residues 1–21 and 41–64; these read MTNTVPSVPAVPNLPTQSDPF and AGVSEAESAPTPLSVPTPALPTTS. Residues 1-225 form a cargo-loading domain region; the sequence is MTNTVPSVPA…AGAVGFDIHQ (225 aa). The segment at 226-626 is cysteine desulfurase domain; the sequence is VRRDFPILQE…RRIQTGSLAL (401 aa). Lys-444 carries the post-translational modification N6-(pyridoxal phosphate)lysine. Cys-582 functions as the Cysteine persulfide intermediate in the catalytic mechanism.

This sequence belongs to the class-V pyridoxal-phosphate-dependent aminotransferase family. Csd subfamily. There are 1-2 copies of this protein in each type 2A encapsulin shell. Pyridoxal 5'-phosphate is required as a cofactor.

It is found in the encapsulin nanocompartment. The enzyme catalyses (sulfur carrier)-H + L-cysteine = (sulfur carrier)-SH + L-alanine. Encapsulated enzyme is 7-fold more active than encapsulated enzyme. Its function is as follows. Cargo protein of a type 2A encapsulin nanocompartment probably involved in sulfur metabolism. Cysteine desulfurases mobilize the sulfur from L-cysteine to yield L-alanine, an essential step in sulfur metabolism for biosynthesis of a variety of sulfur-containing biomolecules. The sequence is that of Cysteine desulfurase from Synechococcus elongatus (strain ATCC 33912 / PCC 7942 / FACHB-805) (Anacystis nidulans R2).